We begin with the raw amino-acid sequence, 156 residues long: Cyclic pyranopterin monophosphate synthase (156 aa).

Substrate-binding positions include 73–75 (LCH) and 110–111 (ME). The active site involves Asp125.

The protein belongs to the MoaC family. As to quaternary structure, homohexamer; trimer of dimers.

It catalyses the reaction (8S)-3',8-cyclo-7,8-dihydroguanosine 5'-triphosphate = cyclic pyranopterin phosphate + diphosphate. It functions in the pathway cofactor biosynthesis; molybdopterin biosynthesis. Functionally, catalyzes the conversion of (8S)-3',8-cyclo-7,8-dihydroguanosine 5'-triphosphate to cyclic pyranopterin monophosphate (cPMP). This is Cyclic pyranopterin monophosphate synthase from Pseudomonas entomophila (strain L48).